Reading from the N-terminus, the 215-residue chain is Nascent polypeptide-associated complex subunit alpha (215 aa).

The segment at 1–81 (MPGEATETVP…SEKKARKAMS (81 aa)) is disordered. Polar residues predominate over residues 9–28 (VPATEQELPQPQAETGSGTE). Acidic residues predominate over residues 29 to 42 (SDSDESVPELEEQD). Position 43 is a phosphoserine; by ILK1 (S43). Residues 44-57 (TQTATQQAQLAAAA) are compositionally biased toward low complexity. Residues 69 to 80 (QSRSEKKARKAM) are required for DNA-binding. Positions 70 to 135 (SRSEKKARKA…AKIEDLSQQA (66 aa)) constitute an NAC-A/B domain. Residues 93-108 (RVTIRKSKNILFVITK) are RNA/DNA-binding. The residue at position 132 (S132) is a Phosphoserine. K142 carries the post-translational modification N6-acetyllysine; alternate. K142 participates in a covalent cross-link: Glycyl lysine isopeptide (Lys-Gly) (interchain with G-Cter in SUMO2); alternate. T159 bears the Phosphothreonine; by GSK3-beta mark. T161 is modified (phosphothreonine). Phosphoserine occurs at positions 166, 186, 191, and 203. Positions 176-213 (VEVKDIELVMSQANVSRAKAVRALKNNSNDIVNAIMEL) constitute a UBA domain.

It belongs to the NAC-alpha family. In terms of assembly, part of the nascent polypeptide-associated complex (NAC), which is a heterodimer of NACA and BTF3 (via NAC-A/B domains). NAC associates with ribosomes through the BTF3/NACB subunit and contacts the ribosomal protein L23, which is positioned near the exiting site. Both subunits can contact nascent polypeptide chains. NACA may also form homodimers, and only this form binds DNA. Interacts with TBP and JUN. Post-translationally, phosphorylation of Ser-43 by ILK during cell adhesion may promote nuclear localization. Phosphorylation of Thr-159 by GSK3B may promote proteasome mediated degradation. In terms of tissue distribution, isoform 1 appears to be ubiquitously expressed.

The protein resides in the cytoplasm. It localises to the nucleus. Prevents inappropriate targeting of non-secretory polypeptides to the endoplasmic reticulum (ER). Binds to nascent polypeptide chains as they emerge from the ribosome and blocks their interaction with the signal recognition particle (SRP), which normally targets nascent secretory peptides to the ER. Also reduces the inherent affinity of ribosomes for protein translocation sites in the ER membrane (M sites). Isoform 1 and isoform 2 appear to bind DNA and play roles in transcription. Isoform 1 may function as a specific coactivator for JUN, acting to stabilize the interaction of JUN homodimers with promoter elements. In Mus musculus (Mouse), this protein is Nascent polypeptide-associated complex subunit alpha (Naca).